The primary structure comprises 268 residues: Expansin-B3 (268 aa).

Positions 1-25 (MAFSISKKAAVAALFSFLVVTCVAG) are cleaved as a signal peptide. The N-linked (GlcNAc...) asparagine glycan is linked to N30. The 107-residue stretch at 62-168 (GGACGFKNTN…KRVPCNFPGL (107 aa)) folds into the Expansin-like EG45 domain. Disulfide bonds link C65/C93, C96/C163, and C101/C107. In terms of domain architecture, Expansin-like CBD spans 181 to 262 (VYFAVLVEYE…NWAPMAVYRS (82 aa)). N-linked (GlcNAc...) asparagine glycosylation is present at N238.

It belongs to the expansin family. Expansin B subfamily. In terms of tissue distribution, expressed in roots, coleoptiles and internodes.

The protein resides in the secreted. It localises to the cell wall. The protein localises to the membrane. Functionally, may cause loosening and extension of plant cell walls by disrupting non-covalent bonding between cellulose microfibrils and matrix glucans. No enzymatic activity has been found. May be required for rapid internodal elongation in deepwater rice during submergence. This is Expansin-B3 (EXPB3) from Oryza sativa subsp. japonica (Rice).